The chain runs to 187 residues: MSRIGKKPIPVPRGVEVTIAEGNVVTVKGPKGTLIQRLPPEMIITHENGVITVARLSDQKQHRALHGLTRSLIANMVTGVTEGYQRVLEITGIGYRAVREGKNLILQVGFSHPIRVTPPEGITFEVMERRSANEPQQVIIRGIDKQKVGEEAAKLRALRPPEPYKGYGIKYREERVRRKAGKAGKAR.

This sequence belongs to the universal ribosomal protein uL6 family. As to quaternary structure, part of the 50S ribosomal subunit.

Functionally, this protein binds to the 23S rRNA, and is important in its secondary structure. It is located near the subunit interface in the base of the L7/L12 stalk, and near the tRNA binding site of the peptidyltransferase center. The chain is Large ribosomal subunit protein uL6 from Roseiflexus castenholzii (strain DSM 13941 / HLO8).